A 109-amino-acid chain; its full sequence is uncharacterized protein (109 aa).

The first 28 residues, 1 to 28 (MNMLAYFLYCRQLLLAVVLIEFPPRLCG), serve as a signal peptide directing secretion.

This is an uncharacterized protein from Homo sapiens (Human).